We begin with the raw amino-acid sequence, 69 residues long: Putative membrane protein insertion efficiency factor (69 aa).

It belongs to the UPF0161 family.

The protein resides in the cell inner membrane. In terms of biological role, could be involved in insertion of integral membrane proteins into the membrane. In Azoarcus sp. (strain BH72), this protein is Putative membrane protein insertion efficiency factor.